The primary structure comprises 394 residues: Quinolinate synthase (394 aa).

Iminosuccinate contacts are provided by His57 and Ser74. [4Fe-4S] cluster is bound at residue Cys121. Residues Tyr153–Asn155 and Ser174 each bind iminosuccinate. Cys243 is a [4Fe-4S] cluster binding site. Residues His269 to Glu271 and Thr286 each bind iminosuccinate. Cys333 lines the [4Fe-4S] cluster pocket.

The protein belongs to the quinolinate synthase family. Type 3 subfamily. [4Fe-4S] cluster serves as cofactor.

It is found in the cytoplasm. The catalysed reaction is iminosuccinate + dihydroxyacetone phosphate = quinolinate + phosphate + 2 H2O + H(+). The protein operates within cofactor biosynthesis; NAD(+) biosynthesis; quinolinate from iminoaspartate: step 1/1. Its function is as follows. Catalyzes the condensation of iminoaspartate with dihydroxyacetone phosphate to form quinolinate. In Corynebacterium glutamicum (strain ATCC 13032 / DSM 20300 / JCM 1318 / BCRC 11384 / CCUG 27702 / LMG 3730 / NBRC 12168 / NCIMB 10025 / NRRL B-2784 / 534), this protein is Quinolinate synthase.